A 382-amino-acid chain; its full sequence is Methenyltetrahydrofolate synthase domain-containing protein (382 aa).

An RRM domain is found at 306-382; that stretch reads TTVYLSDIPP…QAKCVSSQKM (77 aa).

The chain is Methenyltetrahydrofolate synthase domain-containing protein (mthfsd) from Danio rerio (Zebrafish).